Consider the following 120-residue polypeptide: Large ribosomal subunit protein uL18 (120 aa).

It belongs to the universal ribosomal protein uL18 family. Part of the 50S ribosomal subunit; part of the 5S rRNA/L5/L18/L25 subcomplex. Contacts the 5S and 23S rRNAs.

Its function is as follows. This is one of the proteins that bind and probably mediate the attachment of the 5S RNA into the large ribosomal subunit, where it forms part of the central protuberance. The sequence is that of Large ribosomal subunit protein uL18 from Janthinobacterium sp. (strain Marseille) (Minibacterium massiliensis).